A 195-amino-acid polypeptide reads, in one-letter code: MTDRTAAVTRTTAETDIEVTLDVDGDGDSTIDTGIGFFDHMLDSFSTHGLFDLTVQCDGDLDIDDHHTVEDVAITLGEAFTEALDDKRGIRRFADRKVPLDEAVASVVVDISGRPYFEFDGEFSQASVGGMTSHMAKHFCRSLSMNAGLTLHCGVDGENAHHEIEALFKSLARSLDDATRIDERRSDVASTKGEL.

This sequence belongs to the imidazoleglycerol-phosphate dehydratase family.

It localises to the cytoplasm. It catalyses the reaction D-erythro-1-(imidazol-4-yl)glycerol 3-phosphate = 3-(imidazol-4-yl)-2-oxopropyl phosphate + H2O. It functions in the pathway amino-acid biosynthesis; L-histidine biosynthesis; L-histidine from 5-phospho-alpha-D-ribose 1-diphosphate: step 6/9. This is Imidazoleglycerol-phosphate dehydratase from Haloarcula marismortui (strain ATCC 43049 / DSM 3752 / JCM 8966 / VKM B-1809) (Halobacterium marismortui).